Reading from the N-terminus, the 599-residue chain is Zinc metalloproteinase dpy-31 (599 aa).

A signal peptide spans 1–22 (MALLKPFLSRTFSSFFATITGG). Positions 23–211 (RNLIDSIEEL…IQHGRRTKRK (189 aa)) are excised as a propeptide. In terms of domain architecture, Peptidase M12A spans 211–410 (KFIRSELRRW…IRLMNVIYCS (200 aa)). N-linked (GlcNAc...) asparagine glycosylation is present at Asn-251. 5 cysteine pairs are disulfide-bonded: Cys-254–Cys-409, Cys-277–Cys-298, Cys-413–Cys-433, Cys-435–Cys-444, and Cys-455–Cys-483. His-306 contributes to the Zn(2+) binding site. The active site involves Glu-307. Residues His-310 and His-316 each contribute to the Zn(2+) site. The EGF-like domain occupies 405–445 (NVIYCSDSCAQKLPCQRGGYTDPRRCGRCRCPDGFTGKLCE). The CUB domain occupies 455–571 (CGGRIELTSS…KGFQAQVRAL (117 aa)). A glycan (N-linked (GlcNAc...) asparagine) is linked at Asn-522.

Requires Zn(2+) as cofactor.

It is found in the secreted. With respect to regulation, inhibited by marimastat and tripeptide hydroxamic acids. Its function is as follows. Metalloprotease which cleaves the carboxyl terminus of procollagens to mature collagens. Probably involved in cuticular collagen maturation. In Brugia malayi (Filarial nematode worm), this protein is Zinc metalloproteinase dpy-31.